The sequence spans 159 residues: CASP-like protein 5C1 (159 aa).

Residues 1–6 are Cytoplasmic-facing; sequence MDNGDR. A helical transmembrane segment spans residues 7–29; sequence SGAGAGAVGSAGSLGLRVGQAVF. The Extracellular portion of the chain corresponds to 30-48; it reads SSASLLFMSVGVEFFSYTA. Residues 49-69 traverse the membrane as a helical segment; sequence FCFLVTIMGLVIPWSCTLAMI. Residues 70 to 94 are Cytoplasmic-facing; sequence DVYSVFVGCPLRVPGVMVIVVVGDC. The chain crosses the membrane as a helical span at residues 95–117; sequence ALSIVSFAAACSSAAVIDLLLQL. The Extracellular portion of the chain corresponds to 118 to 134; it reads HGSHSSPTFCGRYQLSA. The chain crosses the membrane as a helical span at residues 135 to 155; that stretch reads MMAFLSWLLMAASATFNLWFV. Topologically, residues 156 to 159 are cytoplasmic; sequence ASRW.

The protein belongs to the Casparian strip membrane proteins (CASP) family. Homodimer and heterodimers.

It localises to the cell membrane. This Zea mays (Maize) protein is CASP-like protein 5C1.